The sequence spans 222 residues: Type II restriction enzyme AbrI (222 aa).

Disordered stretches follow at residues 21-45 (GNRE…RRDR) and 161-222 (NQRR…SPRI). Residues 22 to 42 (NREKARQKQQESGKPDQGERR) are compositionally biased toward basic and acidic residues. The span at 188–202 (SSASGSSRSSFTPRP) shows a compositional bias: low complexity.

It belongs to the XhoI type II restriction endonuclease family.

The enzyme catalyses Endonucleolytic cleavage of DNA to give specific double-stranded fragments with terminal 5'-phosphates.. Functionally, a P subtype restriction enzyme that recognizes the double-stranded sequence 5'-CTCGAG-3' and cleaves after C-1. The chain is Type II restriction enzyme AbrI (abrIR) from Azospirillum brasilense.